The primary structure comprises 692 residues: Ena/VASP-like protein (692 aa).

Residues 1–112 enclose the WH1 domain; it reads MSEQSICQAR…NAMLFALNIM (112 aa). Disordered regions lie at residues 116 to 310, 466 to 518, and 531 to 650; these read DGGP…VQKN, SAAM…YEES, and KLRK…NDVS. Composition is skewed to polar residues over residues 123–132 and 159–169; these read RQAQNIQNGP and STTVSTLQINV. Over residues 214 to 226 the composition is skewed to low complexity; the sequence is SSKSTNKSSNRTS. Over residues 231–267 the composition is skewed to polar residues; it reads LQNSHCGSEPSTSQSSAFSPIRPSNGTVSRSIKQISL. Composition is skewed to low complexity over residues 288-310 and 466-479; these read PSLS…VQKN and SAAM…APAP. Residues 480–506 show a composition bias toward pro residues; that stretch reads ASGPPPPPPPGPPPPSGGTPPPAPPLP. Residues 522 to 542 are EVH2 block A; the sequence is GLAAALAGAKLRKVQRPEDGS. The EVH2 stretch occupies residues 522–689; sequence GLAAALAGAK…DAIRQELSRI (168 aa). A KLKR motif is present at residues 531 to 534; the sequence is KLRK. The tract at residues 563-580 is EVH2 block B; the sequence is GGLMEEMNKLLAKRRKAA. Residues 597–617 show a composition bias toward polar residues; it reads EDASLSSSPVTRGPTPQNSSD. The segment covering 618–628 has biased composition (basic and acidic residues); sequence LGKKPWERSNS. Residues 655-689 are EVH2 block C; it reads DFDRMKQEILEEVVRELHKVKEEIIDAIRQELSRI.

Belongs to the Ena/VASP family. As to expression, during embryonic and tadpole development, expressed in the cement gland, brain, neural tube, myotome and neural placodes, including the otic, lateral line and olfactory placodes. All isoforms show similar spatial expression patterns.

It localises to the cytoplasm. It is found in the cytoskeleton. Its subcellular location is the stress fiber. The protein localises to the cell projection. The protein resides in the lamellipodium. Its function is as follows. Ena/VASP proteins are actin-associated proteins involved in a range of processes dependent on cytoskeleton remodeling and cell polarity such as axon guidance and lamellipodial and filopodial dynamics in migrating cells. Evl enhances actin nucleation and polymerization. This is Ena/VASP-like protein from Xenopus laevis (African clawed frog).